A 111-amino-acid polypeptide reads, in one-letter code: UPF0339 protein in ptx operon 5'region (111 aa).

2 repeat units span residues 10 to 58 (DKAG…RYER) and 61 to 109 (SGAD…VVEV).

Belongs to the UPF0339 family. Duplicated subfamily.

The polypeptide is UPF0339 protein in ptx operon 5'region (Stutzerimonas stutzeri (Pseudomonas stutzeri)).